The sequence spans 161 residues: MPSMDIVSEVNEVELRNAVDNSVRELKSRFDFRGKEASIEYKDHVVTLSAEDDFQCQQLVDILRMQMSKRNVDPKSMDVDDKAVHSGKTFSLRVKFKEGIETLIAKKLVKLIKDSKLKVQSSIQGDSVRVTGKKRDDLQAVMALAREADLGQPFQFNNFRD.

This sequence belongs to the YajQ family.

Functionally, nucleotide-binding protein. In Shewanella piezotolerans (strain WP3 / JCM 13877), this protein is Nucleotide-binding protein swp_1151.